Here is a 350-residue protein sequence, read N- to C-terminus: Leucine-rich repeat-containing protein 58 (350 aa).

LRR repeat units follow at residues 14–34 (NLTH…NKRK), 35–56 (DVQQ…VASF), 58–80 (HLHL…LGLT), 81–102 (KLKT…KEMG), 105–125 (RLEV…QFLQ), 128–149 (TLKS…IENL), 151–173 (SLEF…ANLP), 174–195 (YLSY…LAQV), 197–218 (SLRS…ILSL), and 220–240 (HLHE…RDLT).

In Xenopus laevis (African clawed frog), this protein is Leucine-rich repeat-containing protein 58 (lrrc58).